A 30-amino-acid chain; its full sequence is V-type proton ATPase catalytic subunit A isoform 1 (30 aa).

This sequence belongs to the ATPase alpha/beta chains family. As to quaternary structure, V-ATPase is a heteromultimeric enzyme composed of a peripheral catalytic V1 complex (main components: subunits A, B, C, D, E, and F) attached to an integral membrane V0 proton pore complex (main component: the proteolipid protein).

It catalyses the reaction ATP + H2O + 4 H(+)(in) = ADP + phosphate + 5 H(+)(out). Its function is as follows. Catalytic subunit of the peripheral V1 complex of vacuolar ATPase. V-ATPase vacuolar ATPase is responsible for acidifying a variety of intracellular compartments in eukaryotic cells. This is V-type proton ATPase catalytic subunit A isoform 1 from Psilotum nudum (Whisk fern).